The sequence spans 213 residues: Uridine kinase (213 aa).

An ATP-binding site is contributed by 13–20 (GASASGKS).

This sequence belongs to the uridine kinase family.

The protein localises to the cytoplasm. It catalyses the reaction uridine + ATP = UMP + ADP + H(+). It carries out the reaction cytidine + ATP = CMP + ADP + H(+). The protein operates within pyrimidine metabolism; CTP biosynthesis via salvage pathway; CTP from cytidine: step 1/3. It participates in pyrimidine metabolism; UMP biosynthesis via salvage pathway; UMP from uridine: step 1/1. This is Uridine kinase from Histophilus somni (strain 129Pt) (Haemophilus somnus).